Here is a 1115-residue protein sequence, read N- to C-terminus: DNA-directed RNA polymerase subunit beta (1115 aa).

Residues 1084–1115 (HEAGEGEDDEYFEEDEEAVDDEPMTFDDDDME) are disordered. Residues 1088 to 1115 (EGEDDEYFEEDEEAVDDEPMTFDDDDME) show a composition bias toward acidic residues.

The protein belongs to the RNA polymerase beta chain family. The RNAP catalytic core consists of 2 alpha, 1 beta, 1 beta' and 1 omega subunit. When a sigma factor is associated with the core the holoenzyme is formed, which can initiate transcription.

The enzyme catalyses RNA(n) + a ribonucleoside 5'-triphosphate = RNA(n+1) + diphosphate. In terms of biological role, DNA-dependent RNA polymerase catalyzes the transcription of DNA into RNA using the four ribonucleoside triphosphates as substrates. This chain is DNA-directed RNA polymerase subunit beta, found in Desulfitobacterium hafniense (strain Y51).